Here is a 702-residue protein sequence, read N- to C-terminus: Polyphosphate kinase (702 aa).

Position 55 (asparagine 55) interacts with ATP. Residues arginine 389 and arginine 419 each contribute to the Mg(2+) site. Histidine 449 functions as the Phosphohistidine intermediate in the catalytic mechanism. ATP is bound by residues tyrosine 482, arginine 578, and histidine 606.

Belongs to the polyphosphate kinase 1 (PPK1) family. It depends on Mg(2+) as a cofactor. In terms of processing, an intermediate of this reaction is the autophosphorylated ppk in which a phosphate is covalently linked to a histidine residue through a N-P bond.

The enzyme catalyses [phosphate](n) + ATP = [phosphate](n+1) + ADP. Functionally, catalyzes the reversible transfer of the terminal phosphate of ATP to form a long-chain polyphosphate (polyP). The chain is Polyphosphate kinase from Bacillus anthracis.